A 98-amino-acid polypeptide reads, in one-letter code: Small ribosomal subunit protein bS20 (98 aa).

Residues 1 to 15 (MAPKKTTKKGGPKKR) show a composition bias toward basic residues. Residues 1–21 (MAPKKTTKKGGPKKRPSAEKR) are disordered.

The protein belongs to the bacterial ribosomal protein bS20 family.

Binds directly to 16S ribosomal RNA. In Chlamydia felis (strain Fe/C-56) (Chlamydophila felis), this protein is Small ribosomal subunit protein bS20.